A 227-amino-acid polypeptide reads, in one-letter code: PKHD-type hydroxylase GOX0559 (227 aa).

The 101-residue stretch at 78–178 folds into the Fe2OG dioxygenase domain; the sequence is RVYPPLFNRY…RWASFFWSQS (101 aa). Fe cation contacts are provided by His96, Asp98, and His159. Residue Arg169 coordinates 2-oxoglutarate.

Fe(2+) serves as cofactor. It depends on L-ascorbate as a cofactor.

In Gluconobacter oxydans (strain 621H) (Gluconobacter suboxydans), this protein is PKHD-type hydroxylase GOX0559.